Consider the following 1931-residue polypeptide: Chitin synthase 5 (1931 aa).

In terms of domain architecture, Myosin motor spans 11-777; sequence LGVTDLSSLA…LFRFLEDRLR (767 aa). ATP is bound at residue 122–129; the sequence is GPTGSGKS. Residues asparagine 510, asparagine 538, and asparagine 676 are each glycosylated (N-linked (GlcNAc...) asparagine). The segment at 655 to 677 is actin-binding; that stretch reads VDSLLKSFDQTQTWYIFALRPND. Positions 798–817 are disordered; it reads DPFSPHRYQPTSFDSQDHVY. Residue asparagine 842 is glycosylated (N-linked (GlcNAc...) asparagine). The next 2 helical transmembrane spans lie at 912–932 and 951–971; these read WVWL…SKIA and MIIW…GPVI. N-linked (GlcNAc...) asparagine glycosylation is found at asparagine 1062, asparagine 1078, and asparagine 1146. Residues 1220-1240 traverse the membrane as a helical segment; the sequence is ILLALSCVMVAVIGFKFLSAL. Asparagine 1583 carries N-linked (GlcNAc...) asparagine glycosylation. 3 consecutive transmembrane segments (helical) span residues 1615-1635, 1641-1661, and 1668-1688; these read LSTI…YLIV, IPTL…MIFI, and MIAW…LLPL. The interval 1826 to 1847 is disordered; the sequence is AHRPSLDDTSSFHQPYQPAPRP. In terms of domain architecture, DEK-C spans 1875–1930; that stretch reads AITDSQLERSIRKICANAELDKLTKKGVRKELEREYGVELTERREAINRLVEKVLT.

It in the N-terminal section; belongs to the TRAFAC class CC myosin-kinesin ATPase superfamily. Myosin family. In the C-terminal section; belongs to the chitin synthase family. Class V subfamily.

The protein localises to the cell membrane. It is found in the cell septum. It localises to the cell tip. It catalyses the reaction [(1-&gt;4)-N-acetyl-beta-D-glucosaminyl](n) + UDP-N-acetyl-alpha-D-glucosamine = [(1-&gt;4)-N-acetyl-beta-D-glucosaminyl](n+1) + UDP + H(+). In terms of biological role, polymerizes chitin, a structural polymer of the cell wall and septum, by transferring the sugar moiety of UDP-GlcNAc to the non-reducing end of the growing chitin polymer. Produces a large proportion of the chitin that is not deacetylated to chitosan. The polypeptide is Chitin synthase 5 (Cryptococcus neoformans var. grubii serotype A (strain H99 / ATCC 208821 / CBS 10515 / FGSC 9487) (Filobasidiella neoformans var. grubii)).